The sequence spans 554 residues: 2-succinyl-5-enolpyruvyl-6-hydroxy-3-cyclohexene-1-carboxylate synthase (554 aa).

The protein belongs to the TPP enzyme family. MenD subfamily. As to quaternary structure, homodimer. It depends on Mg(2+) as a cofactor. Mn(2+) serves as cofactor. The cofactor is thiamine diphosphate.

It carries out the reaction isochorismate + 2-oxoglutarate + H(+) = 5-enolpyruvoyl-6-hydroxy-2-succinyl-cyclohex-3-ene-1-carboxylate + CO2. It functions in the pathway quinol/quinone metabolism; 1,4-dihydroxy-2-naphthoate biosynthesis; 1,4-dihydroxy-2-naphthoate from chorismate: step 2/7. Its pathway is quinol/quinone metabolism; menaquinone biosynthesis. In terms of biological role, catalyzes the thiamine diphosphate-dependent decarboxylation of 2-oxoglutarate and the subsequent addition of the resulting succinic semialdehyde-thiamine pyrophosphate anion to isochorismate to yield 2-succinyl-5-enolpyruvyl-6-hydroxy-3-cyclohexene-1-carboxylate (SEPHCHC). The polypeptide is 2-succinyl-5-enolpyruvyl-6-hydroxy-3-cyclohexene-1-carboxylate synthase (Mycobacterium tuberculosis (strain ATCC 25177 / H37Ra)).